The sequence spans 113 residues: Parvalbumin beta (113 aa).

Position 1 is an N-acetylalanine (Ala-1). An S-linked (Glc) cysteine glycan is attached at Cys-18. EF-hand domains follow at residues 38–73 and 77–112; these read FSAD…FAAD and LTDA…WGAK. Ca(2+)-binding residues include Asp-51, Asp-53, Glu-55, Phe-57, Glu-59, Glu-62, Asp-90, Asp-92, Asp-94, Lys-96, and Glu-101.

The protein belongs to the parvalbumin family. Muscle (at protein level).

Functionally, in muscle, parvalbumin is thought to be involved in relaxation after contraction. It binds two calcium ions. This chain is Parvalbumin beta, found in Gadus morhua subsp. callarias (Baltic cod).